Reading from the N-terminus, the 374-residue chain is Zinc finger CCCH domain-containing protein 15 homolog (374 aa).

2 consecutive C3H1-type zinc fingers follow at residues 89-116 (DPKSLLCVFFKQGLCGKGAKCKFSHDLA) and 167-197 (YFLEAVENNKYGWFWECPNGGDKCQYRHCLP).

This sequence belongs to the ZC3H15/TMA46 family.

The sequence is that of Zinc finger CCCH domain-containing protein 15 homolog from Caenorhabditis briggsae.